A 135-amino-acid chain; its full sequence is Large ribosomal subunit protein uL16 (135 aa).

Belongs to the universal ribosomal protein uL16 family. Part of the 50S ribosomal subunit.

In terms of biological role, binds 23S rRNA and is also seen to make contacts with the A and possibly P site tRNAs. The chain is Large ribosomal subunit protein uL16 from Desulfatibacillum aliphaticivorans.